The sequence spans 123 residues: Small ribosomal subunit protein uS13c (123 aa).

The tract at residues 90-123 is disordered; that stretch reads GKRHRNSLPVRGQRTRTNARSRRGAKKTVTGKKK. The segment covering 102 to 123 has biased composition (basic residues); the sequence is QRTRTNARSRRGAKKTVTGKKK.

Belongs to the universal ribosomal protein uS13 family. In terms of assembly, part of the 30S ribosomal subunit.

It localises to the plastid. The protein resides in the chloroplast. In terms of biological role, located at the top of the head of the 30S subunit, it contacts several helices of the 16S rRNA. This Thalassiosira pseudonana (Marine diatom) protein is Small ribosomal subunit protein uS13c.